The primary structure comprises 179 residues: MEAFAAESGGMPQLNPEFWVSQIFWLIITFGILYVVLSKLILPKISANLENRKSQILENIEAAEKQREESEQKIEEYEKIVQSSKNEAKNYFKQAREKVLKDIGVKREILEKELDEEVNKAEIEIKTFRDNAPEKIKKIAVETSSDLLQELIGAEVNSSSISAIVEDLSRKKMDEYYGN.

The helical transmembrane segment at 23–43 (IFWLIITFGILYVVLSKLILP) threads the bilayer.

It belongs to the ATPase B chain family. In terms of assembly, F-type ATPases have 2 components, F(1) - the catalytic core - and F(0) - the membrane proton channel. F(1) has five subunits: alpha(3), beta(3), gamma(1), delta(1), epsilon(1). F(0) has three main subunits: a(1), b(2) and c(10-14). The alpha and beta chains form an alternating ring which encloses part of the gamma chain. F(1) is attached to F(0) by a central stalk formed by the gamma and epsilon chains, while a peripheral stalk is formed by the delta and b chains.

It is found in the cell inner membrane. Its function is as follows. F(1)F(0) ATP synthase produces ATP from ADP in the presence of a proton or sodium gradient. F-type ATPases consist of two structural domains, F(1) containing the extramembraneous catalytic core and F(0) containing the membrane proton channel, linked together by a central stalk and a peripheral stalk. During catalysis, ATP synthesis in the catalytic domain of F(1) is coupled via a rotary mechanism of the central stalk subunits to proton translocation. Component of the F(0) channel, it forms part of the peripheral stalk, linking F(1) to F(0). This is ATP synthase subunit b from Pelagibacter ubique (strain HTCC1062).